A 406-amino-acid polypeptide reads, in one-letter code: MKNEVKKVVLAYSGGLDTSIILKWLQDEYNCEVVTFTADIGQGEELEPARKKALSLGIKEENIFIKDLRDEFVKDYVFPMFRANAIYEGEYLLGTSIARPLIAKTQAQIALQTGADAVSHGATGKGNDQVRFELGYLAFNPDLKIIAPWREWDLNSREKLLAYAQKHGIDISKKKGKSPYSMDANLLHISYEGLVLEDPAHAPEEDMWRWSKSPKDAPHESEIIELDFQKGDLVAINGEKLSPAGLLTKLNELGCKHGIGRLDIVENRYVGMKSRGCYETPGGTILLKAHRALESITLDREAAHLKDELMPKYASLIYNGYWFSPERMMLQALIDESQIHANGRVKLELYKGNVMVIGRQSANDSLFNAAYCTFEEDEVYNQKDAAGFIKLNALRFIIAGKNGRKF.

ATP-binding positions include 11-19 (AYSGGLDTS) and Ala38. 2 residues coordinate L-citrulline: Tyr91 and Ser96. Gly121 is a binding site for ATP. L-aspartate contacts are provided by Thr123, Asn127, and Asp128. Position 127 (Asn127) interacts with L-citrulline. 5 residues coordinate L-citrulline: Arg131, Ser181, Ser190, Glu266, and Tyr278.

Belongs to the argininosuccinate synthase family. Type 1 subfamily. Homotetramer.

It localises to the cytoplasm. The catalysed reaction is L-citrulline + L-aspartate + ATP = 2-(N(omega)-L-arginino)succinate + AMP + diphosphate + H(+). The protein operates within amino-acid biosynthesis; L-arginine biosynthesis; L-arginine from L-ornithine and carbamoyl phosphate: step 2/3. This is Argininosuccinate synthase from Campylobacter jejuni subsp. doylei (strain ATCC BAA-1458 / RM4099 / 269.97).